The chain runs to 549 residues: Biotin-dependent acetyl-/propionyl-coenzyme A carboxylase beta5 subunit (549 aa).

Residues 25 to 281 form the CoA carboxyltransferase N-terminal domain; that stretch reads TAGKLAELHK…NNFTDAPRYS (257 aa). The 248-residue stretch at 295–542 folds into the CoA carboxyltransferase C-terminal domain; that stretch reads AKDLELDTLI…ERKIAHLPPK (248 aa).

This sequence belongs to the AccD/PCCB family. As to quaternary structure, the biotin-dependent acyl-CoA carboxylase complex is composed of AccA3, which contains the biotin carboxylase (BC) and biotin carboxyl carrier protein (BCCP) domains, and AccD5, which contains the carboxyl transferase (CT) domain.

The enzyme catalyses N(6)-carboxybiotinyl-L-lysyl-[protein] + acetyl-CoA = N(6)-biotinyl-L-lysyl-[protein] + malonyl-CoA. It carries out the reaction N(6)-carboxybiotinyl-L-lysyl-[protein] + propanoyl-CoA = methylmalonyl-CoA + N(6)-biotinyl-L-lysyl-[protein]. Its pathway is lipid metabolism; mycolic acid biosynthesis. Component of a biotin-dependent acyl-CoA carboxylase complex. This subunit transfers the CO2 from carboxybiotin to the CoA ester substrate. When associated with the alpha3 subunit AccA3, is involved in the carboxylation of acetyl-CoA and propionyl-CoA. This chain is Biotin-dependent acetyl-/propionyl-coenzyme A carboxylase beta5 subunit (accD5), found in Mycobacterium leprae (strain TN).